Reading from the N-terminus, the 156-residue chain is 3-hydroxyacyl-[acyl-carrier-protein] dehydratase FabZ (156 aa).

His-57 is an active-site residue.

Belongs to the thioester dehydratase family. FabZ subfamily.

It localises to the cytoplasm. It catalyses the reaction a (3R)-hydroxyacyl-[ACP] = a (2E)-enoyl-[ACP] + H2O. Functionally, involved in unsaturated fatty acids biosynthesis. Catalyzes the dehydration of short chain beta-hydroxyacyl-ACPs and long chain saturated and unsaturated beta-hydroxyacyl-ACPs. This Anaeromyxobacter sp. (strain K) protein is 3-hydroxyacyl-[acyl-carrier-protein] dehydratase FabZ.